A 56-amino-acid polypeptide reads, in one-letter code: MGHQQLYWSHPRKFGQGSRSCRVCSNRHGLIRKYGLNMCRQCFRQYAKDIGFIKLD.

Ser9 is modified (phosphoserine). Omega-N-methylarginine is present on Arg12. Residues Cys21, Cys24, Cys39, and Cys42 each coordinate Zn(2+). Residue Lys48 is modified to N6-acetyllysine.

This sequence belongs to the universal ribosomal protein uS14 family. Component of the 40S small ribosomal subunit. Zn(2+) serves as cofactor.

The protein resides in the cytoplasm. The protein localises to the cytosol. It is found in the rough endoplasmic reticulum. In terms of biological role, component of the small ribosomal subunit. The ribosome is a large ribonucleoprotein complex responsible for the synthesis of proteins in the cell. This is Small ribosomal subunit protein uS14 (Rps29) from Mus musculus (Mouse).